Reading from the N-terminus, the 532-residue chain is Cytochrome P450 monooxygenase criE (532 aa).

Residues 18-38 (VSPAALSWAVVAVYIGTFFWL) form a helical membrane-spanning segment. Residue Cys-441 coordinates heme.

This sequence belongs to the cytochrome P450 family. The cofactor is heme.

It is found in the membrane. The enzyme catalyses preechinulin + reduced [NADPH--hemoprotein reductase] + O2 = neoechinulin A + oxidized [NADPH--hemoprotein reductase] + 2 H2O + H(+). It functions in the pathway secondary metabolite biosynthesis. The protein operates within alkaloid biosynthesis. Its function is as follows. Cytochrome P450 monooxygenase; part of the gene cluster that mediates the biosynthesis of echinulin family alkaloid. The pathway begins with the biosynthesis of the cyclic dipeptide cyclo-L-Trp-L-Ala (cyclo-TA) by the NRPS criC via condensation of L-alanine and L-tryptophan. The prenyltransferase criA then catalyzes the first prenylation step, a reverse prenylation reaction at C2, to yield preechinulin. Preechinulin is the substrate of the cytochrome P450 monooxygenase criE that catalyzes the formation of the double bond between C10 and C11 to produce neoechulin A. The unique prenyltransferase criF functions as a competitive enzyme with criE for preechinulin metabolization and uses preechinulin for effective regiospecific prenylations. Preechinulin is prenylated by criF at C5 or C7. C7-prenylation leads to accumulation of tardioxopiperazine B without further modification by criF. In contrast, the C5-prenylated tardioxopiperazine A can be prenylated again by criF, predominantly at C7 to form echinulin or less frequently at C4 to give variecolorin L. CriF also accepts neoechilunin A to produce varlecolorin G (prenylation at C5) or isoechinulin A (prenylation at C7). CriF further converts isoechinulin A into dehydroechinulin. Moreover, a yet unidentified enzyme can also convert neoechilunin A into neoechilunin B by introducing a double bond between positions C14 and C17 and thus provides a further substrate to criF for C5 and C7 prenylation. This chain is Cytochrome P450 monooxygenase criE, found in Aspergillus cristatus (Chinese Fuzhuan brick tea-fermentation fungus).